Reading from the N-terminus, the 241-residue chain is MSLTLLPAVDVADGQAVRLVQGAAGSETAYGDPLDAALAWQRDGAEWIHLVDLDAAFGRGSNADLLADVVRQLDVRVELSGGVRDDESLRAALATGATRVNIGTAALEDPLWCDRVCGEYGDRVAIGLDVRGRTLSARGWTRDGGDLWEVLERLDRAGASRYVVTDITKDGTMRGPNLELLREVCARTNAPVIASGGVSTLADLRALAALEPAGVEGVIAGKALYAGAFTVAEALRTLADA.

The Proton acceptor role is filled by aspartate 10. The active-site Proton donor is aspartate 129.

It belongs to the HisA/HisF family.

The protein resides in the cytoplasm. It carries out the reaction 1-(5-phospho-beta-D-ribosyl)-5-[(5-phospho-beta-D-ribosylamino)methylideneamino]imidazole-4-carboxamide = 5-[(5-phospho-1-deoxy-D-ribulos-1-ylimino)methylamino]-1-(5-phospho-beta-D-ribosyl)imidazole-4-carboxamide. Its pathway is amino-acid biosynthesis; L-histidine biosynthesis; L-histidine from 5-phospho-alpha-D-ribose 1-diphosphate: step 4/9. This Salinispora arenicola (strain CNS-205) protein is 1-(5-phosphoribosyl)-5-[(5-phosphoribosylamino)methylideneamino] imidazole-4-carboxamide isomerase.